A 405-amino-acid chain; its full sequence is Probable tRNA sulfurtransferase (405 aa).

The THUMP domain occupies 60–165; the sequence is ETIDQRLKLV…QDAIYISNQL (106 aa). Residues 183–184, 208–209, Arg265, Gly287, and Gln296 contribute to the ATP site; these read ML and HF.

Belongs to the ThiI family.

The protein localises to the cytoplasm. The catalysed reaction is [ThiI sulfur-carrier protein]-S-sulfanyl-L-cysteine + a uridine in tRNA + 2 reduced [2Fe-2S]-[ferredoxin] + ATP + H(+) = [ThiI sulfur-carrier protein]-L-cysteine + a 4-thiouridine in tRNA + 2 oxidized [2Fe-2S]-[ferredoxin] + AMP + diphosphate. It carries out the reaction [ThiS sulfur-carrier protein]-C-terminal Gly-Gly-AMP + S-sulfanyl-L-cysteinyl-[cysteine desulfurase] + AH2 = [ThiS sulfur-carrier protein]-C-terminal-Gly-aminoethanethioate + L-cysteinyl-[cysteine desulfurase] + A + AMP + 2 H(+). It functions in the pathway cofactor biosynthesis; thiamine diphosphate biosynthesis. In terms of biological role, catalyzes the ATP-dependent transfer of a sulfur to tRNA to produce 4-thiouridine in position 8 of tRNAs, which functions as a near-UV photosensor. Also catalyzes the transfer of sulfur to the sulfur carrier protein ThiS, forming ThiS-thiocarboxylate. This is a step in the synthesis of thiazole, in the thiamine biosynthesis pathway. The sulfur is donated as persulfide by IscS. The sequence is that of Probable tRNA sulfurtransferase from Lactobacillus johnsonii (strain CNCM I-12250 / La1 / NCC 533).